The sequence spans 180 residues: Oligoribonuclease (180 aa).

The Exonuclease domain occupies 7–170; sequence LIWIDLEMTG…DDIRDSINEL (164 aa). Y128 is a catalytic residue.

Belongs to the oligoribonuclease family.

It localises to the cytoplasm. Its function is as follows. 3'-to-5' exoribonuclease specific for small oligoribonucleotides. In Marinobacter nauticus (strain ATCC 700491 / DSM 11845 / VT8) (Marinobacter aquaeolei), this protein is Oligoribonuclease.